Here is a 35-residue protein sequence, read N- to C-terminus: Neurotoxin (35 aa).

Cystine bridges form between C7–C27, C14–C32, and C18–C34.

As to expression, expressed by the venom gland.

The protein localises to the secreted. Neurotoxin. Decreases the action potential of myelinated nerves in mice and frogs. This Buthus sp. (strain IY-2001) (Scorpion) protein is Neurotoxin.